The chain runs to 243 residues: Probable sentrin-specific protease 8 (243 aa).

The interval 12-185 (SAIYQSDINI…LYVLSIIEEL (174 aa)) is protease. Catalysis depends on residues H109 and D126. Catalysis depends on C174, which acts as the Nucleophile.

Belongs to the peptidase C48 family.

In terms of biological role, protease that catalyzes two essential functions in the nedd8 pathway: processing of full-length nedd8 to its mature form and deconjugation of nedd8 from targeted proteins. The polypeptide is Probable sentrin-specific protease 8 (senp8) (Dictyostelium discoideum (Social amoeba)).